Reading from the N-terminus, the 195-residue chain is MAKEGLGLEITELRLGLPDAEHQVSVVNKKNEKKRAFSEIDDGVGDENSSSGGGDRKMETNKSQVVGWPPVCSYRKKNSMNEGASKMYVKVSMDGAPFLRKIDLGLHKGYSDLALALDKLFGCYGMVEALKNADNSEHVPIYEDKDGDWMLVGDVPWEMFMESCKRLRIMKKSDAKGFGLQPKGSLKGFIESAAK.

The EAR-like (transcriptional repression) motif lies at 13 to 17 (LRLGL). Positions 37-60 (FSEIDDGVGDENSSSGGGDRKMET) are disordered. Residues 86–174 (KMYVKVSMDG…KRLRIMKKSD (89 aa)) enclose the PB1 domain.

This sequence belongs to the Aux/IAA family. In terms of assembly, homodimers and heterodimers.

It is found in the nucleus. Its function is as follows. Aux/IAA proteins are short-lived transcriptional factors that function as repressors of early auxin response genes at low auxin concentrations. Repression is thought to result from the interaction with auxin response factors (ARFs), proteins that bind to the auxin-responsive promoter element (AuxRE). Formation of heterodimers with ARF proteins may alter their ability to modulate early auxin response genes expression. In Glycine max (Soybean), this protein is Auxin-induced protein AUX22 (AUX22).